Here is a 163-residue protein sequence, read N- to C-terminus: Putative C-type lectin protein FPV239 (163 aa).

In terms of domain architecture, C-type lectin spans C48–R159. 2 cysteine pairs are disulfide-bonded: C76–C158 and C137–C150.

This Fowlpox virus (strain NVSL) (FPV) protein is Putative C-type lectin protein FPV239.